A 205-amino-acid chain; its full sequence is Putative endonuclease segE (205 aa).

A GIY-YIG domain is found at 1-84; that stretch reads MYHFVYETTN…LIKSKNYYNM (84 aa).

To endonucleases of group I introns of fungi and phage. It depends on Mg(2+) as a cofactor.

Functionally, probably involved in the movement of the endonuclease-encoding DNA. This chain is Putative endonuclease segE (segE), found in Escherichia coli (Bacteriophage T4).